A 250-amino-acid chain; its full sequence is MNSMTSAVPVANSVLVVAPHNGYPVTPGIMSHVPLYPNSQPQVHLVPGNPPSLVSNVNGQPVQKALKEGKTLGAIQIIIGLAHIGLGSIMATVLVGEYLSISFYGGFPFWGGLWFIISGSLSVAAENQPYSYCLLSGSLGLNIVSAICSAVGVILFITDLSIPHPYAYPDYYPYAWGVNPGMAISGVLLVFCLLEFGIACASSHFGCQLVCCQSSNVSVIYPNIYAANPVITPEPVTSPPSYSSEIQANK.

Over 1-74 (MNSMTSAVPV…ALKEGKTLGA (74 aa)) the chain is Cytoplasmic. The chain crosses the membrane as a helical span at residues 75 to 95 (IQIIIGLAHIGLGSIMATVLV). The Extracellular segment spans residues 96 to 98 (GEY). A helical membrane pass occupies residues 99–119 (LSISFYGGFPFWGGLWFIISG). The Cytoplasmic portion of the chain corresponds to 120-136 (SLSVAAENQPYSYCLLS). A helical membrane pass occupies residues 137–157 (GSLGLNIVSAICSAVGVILFI). Residues 158–180 (TDLSIPHPYAYPDYYPYAWGVNP) are Extracellular-facing. Residues 181 to 201 (GMAISGVLLVFCLLEFGIACA) form a helical membrane-spanning segment. At 202–250 (SSHFGCQLVCCQSSNVSVIYPNIYAANPVITPEPVTSPPSYSSEIQANK) the chain is on the cytoplasmic side.

The protein belongs to the MS4A family. As to expression, expressed by hematopoietic tissues and cells lines.

It is found in the membrane. May be involved in signal transduction as a component of a multimeric receptor complex. The sequence is that of Membrane-spanning 4-domains subfamily A member 8 (MS4A8) from Homo sapiens (Human).